The primary structure comprises 391 residues: Processive diacylglycerol beta-glucosyltransferase (391 aa).

This sequence belongs to the glycosyltransferase 28 family. UgtP subfamily.

It is found in the cell membrane. It catalyses the reaction a 1,2-diacyl-3-O-(beta-D-glucopyranosyl)-sn-glycerol + UDP-alpha-D-glucose = a 1,2-diacyl-3-O-(beta-D-Glc-(1-&gt;6)-beta-D-Glc)-sn-glycerol + UDP + H(+). It carries out the reaction a 1,2-diacyl-sn-glycerol + UDP-alpha-D-glucose = a 1,2-diacyl-3-O-(beta-D-glucopyranosyl)-sn-glycerol + UDP + H(+). It participates in glycolipid metabolism; diglucosyl-diacylglycerol biosynthesis. In terms of biological role, processive glucosyltransferase involved in the biosynthesis of both the bilayer- and non-bilayer-forming membrane glucolipids. Is able to successively transfer two glucosyl residues to diacylglycerol (DAG), thereby catalyzing the formation of beta-monoglucosyl-DAG (3-O-(beta-D-glucopyranosyl)-1,2-diacyl-sn-glycerol) and beta-diglucosyl-DAG (3-O-(beta-D-glucopyranosyl-beta-(1-&gt;6)-D-glucopyranosyl)-1,2-diacyl-sn-glycerol). Beta-diglucosyl-DAG is the predominant glycolipid found in Bacillales and is also used as a membrane anchor for lipoteichoic acid (LTA). The protein is Processive diacylglycerol beta-glucosyltransferase of Staphylococcus aureus (strain bovine RF122 / ET3-1).